The sequence spans 382 residues: Succinate--CoA ligase [ADP-forming] subunit beta (382 aa).

The ATP-grasp domain maps to 9-237 (KQVFADAGIP…AAEGDELEQK (229 aa)). ATP contacts are provided by residues Lys45, 52-54 (GRG), Glu91, Val94, and Glu99. Asn191 and Asp205 together coordinate Mg(2+). Substrate-binding positions include Asn257 and 314 to 316 (GIT).

It belongs to the succinate/malate CoA ligase beta subunit family. In terms of assembly, heterotetramer of two alpha and two beta subunits. It depends on Mg(2+) as a cofactor.

It catalyses the reaction succinate + ATP + CoA = succinyl-CoA + ADP + phosphate. The enzyme catalyses GTP + succinate + CoA = succinyl-CoA + GDP + phosphate. The protein operates within carbohydrate metabolism; tricarboxylic acid cycle; succinate from succinyl-CoA (ligase route): step 1/1. Its function is as follows. Succinyl-CoA synthetase functions in the citric acid cycle (TCA), coupling the hydrolysis of succinyl-CoA to the synthesis of either ATP or GTP and thus represents the only step of substrate-level phosphorylation in the TCA. The beta subunit provides nucleotide specificity of the enzyme and binds the substrate succinate, while the binding sites for coenzyme A and phosphate are found in the alpha subunit. This is Succinate--CoA ligase [ADP-forming] subunit beta from Haloarcula marismortui (strain ATCC 43049 / DSM 3752 / JCM 8966 / VKM B-1809) (Halobacterium marismortui).